We begin with the raw amino-acid sequence, 703 residues long: Peptide transporter CstA (703 aa).

16 consecutive transmembrane segments (helical) span residues 6–26 (TKIL…YLAL), 29–49 (GESV…MIGY), 87–107 (VLFG…GPIL), 118–138 (LWIL…VLFI), 162–182 (VAMV…AMVV), 190–210 (PWGL…GIYM), 221–241 (ASII…VIAA), 256–276 (LAIV…WFLL), 282–302 (LSTF…VLVA), 319–339 (GPVF…CGAI), 374–394 (AVAI…YFAI), 463–483 (LMAF…LTAV), 514–534 (GLLA…QGAI), 547–567 (FGVS…TILV), 574–594 (YTWV…YGGI), and 660–680 (AILC…CIGI).

It belongs to the peptide transporter carbon starvation (CstA) (TC 2.A.114) family.

It is found in the cell inner membrane. In terms of biological role, involved in the uptake of dipeptides and tripeptides. May influence host-pathogen interactions. Involved in motility and agglutination, and has a role in stimulation of dendritic cells. This Campylobacter jejuni subsp. jejuni serotype O:2 (strain ATCC 700819 / NCTC 11168) protein is Peptide transporter CstA.